Here is a 106-residue protein sequence, read N- to C-terminus: Iron-sulfur cluster assembly protein CyaY (106 aa).

Belongs to the frataxin family.

Its function is as follows. Involved in iron-sulfur (Fe-S) cluster assembly. May act as a regulator of Fe-S biogenesis. The chain is Iron-sulfur cluster assembly protein CyaY from Escherichia coli (strain SMS-3-5 / SECEC).